A 127-amino-acid chain; its full sequence is Putative defensin-like protein 180 (127 aa).

Residues 1–26 form the signal peptide; sequence MERITSLVFFASFLIIFVSGVNQTRA. 8 cysteine pairs are disulfide-bonded: Cys29-Cys70, Cys36-Cys55, Cys39-Cys64, Cys43-Cys66, Cys81-Cys127, Cys92-Cys112, Cys97-Cys121, and Cys101-Cys123.

It belongs to the DEFL family.

It localises to the secreted. The sequence is that of Putative defensin-like protein 180 (LCR58) from Arabidopsis thaliana (Mouse-ear cress).